Reading from the N-terminus, the 195-residue chain is GTP cyclohydrolase 1 (195 aa).

Zn(2+) contacts are provided by C86, H89, and C158.

It belongs to the GTP cyclohydrolase I family. Homomer.

The catalysed reaction is GTP + H2O = 7,8-dihydroneopterin 3'-triphosphate + formate + H(+). Its pathway is cofactor biosynthesis; 7,8-dihydroneopterin triphosphate biosynthesis; 7,8-dihydroneopterin triphosphate from GTP: step 1/1. In Ruminiclostridium cellulolyticum (strain ATCC 35319 / DSM 5812 / JCM 6584 / H10) (Clostridium cellulolyticum), this protein is GTP cyclohydrolase 1.